Reading from the N-terminus, the 1284-residue chain is MEGSEAAQQKDSVKVVVNIRPLITPELLLGCTDCVTVTPGEPQVQIGPHVFTYDHVFGSTGSPSSLIFEQCVHPLIDSLFRGYNATVLAYGQTGSGKTYTMGTNYTGEANCGGIIPQVMETIFKKADALKDGTEFLIRVSFIEIFKEEVFDLLDASHAALRLDSGSVAKATAPARVPIQIRETGNGGITLAGVTEAEVKTKEEMASFLARGSSSRATGSTNMNSQSSRSHAIFTISMDQKKTSSASDKLSNDDYDILSSKFHLVDLAGSERAKRTGADGLRLKEGIHINRGLLALGNVISALGDEKKRKEGAFVPYRDSKLTRLLQDSLGGNSKTAMIACISPADSNAEETINTLKYANRARNIQNKAVVWSFSLKINRDPVTAEMQKLRSQLEQLQTELLFSRSGSAALEELQLLQQKVSLLELKNSELNHELKERELSYEQLAQSALAAQLEKDQLMLKIESARNGKSWDDIENTDTDQDVEVMKRYILKIQQLESELTRQKFSSTCKNDLHDRFAMDKDLLLDDLGSGCEVGTPDASSAVNFRITPVPAGEADEEKERDHSSMQDKLDKELQELDKRLQQKEAEMKEFAKSDTSVLKQHYEKKLNEMEQEKKALQKEIEELRHALTNITSSTDESAQKLKENYLQKLNTLESQVSELKKKQEAQQQLIRQKQRSDEAAKRLQEDIHRIKSQKVQLQQKIKQESEQFRSWKAAREKEVLQLKKEGRRNEYEMHKLLALNQRQKMVLQRKTEEAAMATKRLKESLEAKKSTRDTYGSASGSGIQALMRAIDDELEVTVRAYELRSHYERQMQERAAISKEIAKLKECPQAMSPSARSSRISALENMLSSSSSAMVSMASQLSEAEERERAFNGKGRWNHVRSLPDAKNTMNYLFQLASSSRCQQLDKEVMCKEKEHLICDLKEKVVALNGRIRQLETQVKDLNNQNMLLFTAISEAKNPVGTSRKGTVGSEDGQHYAMRKSIRASHSLHYSKNSFLWSDDMDISDSEKSEGSDADWEASDADYGASDADWECSKKVRRRRQTVSSHLNPNPGSGTTQKSAKSEMASQEKSTSLDLAPQCCSCSKYSSCKTQKCECRASGSHCGGDCGCITSRCSNRVDMKEEKEGGGVVEVSSSDDVDDAKVQEIVKEGVMLLENSMSEKEAQETKSRKPLADIGNGVVKQTGAKPKQRKNWRKSTVQLVPSAPPLPPTAPQNTEPVPRNRDIPLRLPRAMSSPAVDSIPLTDRNAAKPDESMSSNKENVTAVRARSPARPRKNANEKENHLR.

The Kinesin motor domain maps to 12 to 364; that stretch reads SVKVVVNIRP…LKYANRARNI (353 aa). 91–98 lines the ATP pocket; sequence GQTGSGKT. Coiled coils occupy residues 407–445, 561–711, and 911–950; these read SAALEELQLLQQKVSLLELKNSELNHELKERELSYEQLA, RDHS…QFRS, and MCKEKEHLICDLKEKVVALNGRIRQLETQVKDLNNQNMLL. Disordered regions lie at residues 1040-1070 and 1158-1284; these read RRQTVSSHLNPNPGSGTTQKSAKSEMASQEK and MSEK…NHLR. Over residues 1043-1070 the composition is skewed to polar residues; sequence TVSSHLNPNPGSGTTQKSAKSEMASQEK. 2 stretches are compositionally biased toward basic and acidic residues: residues 1158-1172 and 1275-1284; these read MSEKEAQETKSRKPL and NANEKENHLR.

This sequence belongs to the TRAFAC class myosin-kinesin ATPase superfamily. Kinesin family. KIN-4 subfamily. As to quaternary structure, homodimer.

In terms of biological role, microtubule-dependent motor protein involved in the control of the oriented deposition of cellulose microfibrils. This chain is Kinesin-like protein KIN-4C, found in Oryza sativa subsp. japonica (Rice).